We begin with the raw amino-acid sequence, 761 residues long: RNA-binding protein 12B (761 aa).

Phosphoserine occurs at positions 98, 101, and 112. K114 participates in a covalent cross-link: Glycyl lysine isopeptide (Lys-Gly) (interchain with G-Cter in SUMO2). The disordered stretch occupies residues 120–147 (SGYGSSINQDAGFHSNGTGHGNLRPRKT). K151 is covalently cross-linked (Glycyl lysine isopeptide (Lys-Gly) (interchain with G-Cter in SUMO2)). An RRM 1 domain is found at 155–230 (PYLFLRGLPY…RFIEVMQGSE (76 aa)). Over residues 247–262 (LRRSEEHSPPRGINDR) the composition is skewed to basic and acidic residues. The segment at 247–278 (LRRSEEHSPPRGINDRHFRKRSHSKSPRRTRS) is disordered. 2 positions are modified to phosphoserine: S250 and S254. Basic residues predominate over residues 263 to 278 (HFRKRSHSKSPRRTRS). The residue at position 276 (T276) is a Phosphothreonine. S278, S280, S292, and S294 each carry phosphoserine. Positions 284–360 (FYVHLKNLSL…RPVHIDPISR (77 aa)) constitute an RRM 2 domain. K319 is modified (N6-acetyllysine). A Glycyl lysine isopeptide (Lys-Gly) (interchain with G-Cter in SUMO2) cross-link involves residue K335. Positions 372–384 (KKRSGSPERDRPG) are enriched in basic and acidic residues. Positions 372–392 (KKRSGSPERDRPGHVSQKYSQ) are disordered. S377 is modified (phosphoserine). Positions 400–477 (LCIYIRNFPF…TEVLLRLISE (78 aa)) constitute an RRM 3 domain. Residues K514 and K541 each participate in a glycyl lysine isopeptide (Lys-Gly) (interchain with G-Cter in SUMO2) cross-link. Positions 538–621 (DNFKHPQRDF…RHPREEDWRR (84 aa)) are enriched in basic and acidic residues. Positions 538–690 (DNFKHPQRDF…THQMKTSGAL (153 aa)) are disordered. Phosphoserine occurs at positions 575 and 591. A compositionally biased stretch (polar residues) spans 627 to 654 (LQSTSGGHPQSISGGHPQSISGARPRST). Residues 661-672 (SISGGRLRSISG) are compositionally biased toward low complexity.

The protein is RNA-binding protein 12B (RBM12B) of Pongo abelii (Sumatran orangutan).